Here is a 283-residue protein sequence, read N- to C-terminus: Acetylglutamate kinase (283 aa).

Residues Gly64–Gly65, Arg86, and Asn178 each bind substrate.

The protein belongs to the acetylglutamate kinase family. ArgB subfamily.

It localises to the cytoplasm. The enzyme catalyses N-acetyl-L-glutamate + ATP = N-acetyl-L-glutamyl 5-phosphate + ADP. It participates in amino-acid biosynthesis; L-arginine biosynthesis; N(2)-acetyl-L-ornithine from L-glutamate: step 2/4. Its function is as follows. Catalyzes the ATP-dependent phosphorylation of N-acetyl-L-glutamate. This is Acetylglutamate kinase from Lactococcus lactis subsp. lactis (strain IL1403) (Streptococcus lactis).